Reading from the N-terminus, the 211-residue chain is Imidazole glycerol phosphate synthase subunit HisH (211 aa).

The region spanning 3-211 (VIAVIDYDMG…VNQIRVKAIA (209 aa)) is the Glutamine amidotransferase type-1 domain. Cys81 serves as the catalytic Nucleophile. Active-site residues include His186 and Glu188.

As to quaternary structure, heterodimer of HisH and HisF.

The protein resides in the cytoplasm. The catalysed reaction is 5-[(5-phospho-1-deoxy-D-ribulos-1-ylimino)methylamino]-1-(5-phospho-beta-D-ribosyl)imidazole-4-carboxamide + L-glutamine = D-erythro-1-(imidazol-4-yl)glycerol 3-phosphate + 5-amino-1-(5-phospho-beta-D-ribosyl)imidazole-4-carboxamide + L-glutamate + H(+). It carries out the reaction L-glutamine + H2O = L-glutamate + NH4(+). It functions in the pathway amino-acid biosynthesis; L-histidine biosynthesis; L-histidine from 5-phospho-alpha-D-ribose 1-diphosphate: step 5/9. IGPS catalyzes the conversion of PRFAR and glutamine to IGP, AICAR and glutamate. The HisH subunit catalyzes the hydrolysis of glutamine to glutamate and ammonia as part of the synthesis of IGP and AICAR. The resulting ammonia molecule is channeled to the active site of HisF. This chain is Imidazole glycerol phosphate synthase subunit HisH, found in Gloeothece citriformis (strain PCC 7424) (Cyanothece sp. (strain PCC 7424)).